The chain runs to 235 residues: Probable transcriptional regulatory protein Cj1172c (235 aa).

This sequence belongs to the TACO1 family.

It is found in the cytoplasm. The sequence is that of Probable transcriptional regulatory protein Cj1172c from Campylobacter jejuni subsp. jejuni serotype O:2 (strain ATCC 700819 / NCTC 11168).